We begin with the raw amino-acid sequence, 155 residues long: Small ribosomal subunit protein uS7 (155 aa).

It belongs to the universal ribosomal protein uS7 family. Part of the 30S ribosomal subunit. Contacts proteins S9 and S11.

Its function is as follows. One of the primary rRNA binding proteins, it binds directly to 16S rRNA where it nucleates assembly of the head domain of the 30S subunit. Is located at the subunit interface close to the decoding center, probably blocks exit of the E-site tRNA. In Sulfurimonas denitrificans (strain ATCC 33889 / DSM 1251) (Thiomicrospira denitrificans (strain ATCC 33889 / DSM 1251)), this protein is Small ribosomal subunit protein uS7.